Reading from the N-terminus, the 311-residue chain is tRNA-cytidine(32) 2-sulfurtransferase (311 aa).

The PP-loop motif motif lies at 47-52 (SGGKDS). Residues cysteine 122, cysteine 125, and cysteine 213 each coordinate [4Fe-4S] cluster.

It belongs to the TtcA family. As to quaternary structure, homodimer. The cofactor is Mg(2+). Requires [4Fe-4S] cluster as cofactor.

The protein localises to the cytoplasm. It catalyses the reaction cytidine(32) in tRNA + S-sulfanyl-L-cysteinyl-[cysteine desulfurase] + AH2 + ATP = 2-thiocytidine(32) in tRNA + L-cysteinyl-[cysteine desulfurase] + A + AMP + diphosphate + H(+). It participates in tRNA modification. Its function is as follows. Catalyzes the ATP-dependent 2-thiolation of cytidine in position 32 of tRNA, to form 2-thiocytidine (s(2)C32). The sulfur atoms are provided by the cysteine/cysteine desulfurase (IscS) system. This chain is tRNA-cytidine(32) 2-sulfurtransferase, found in Klebsiella pneumoniae (strain 342).